The primary structure comprises 520 residues: Poly(A)-specific ribonuclease PNLDC1 (520 aa).

Mg(2+) is bound by residues aspartate 17, glutamate 19, aspartate 260, and aspartate 354. Residues 497–513 (CLLQVCGIVTAWALLAF) form a helical membrane-spanning segment.

This sequence belongs to the CAF1 family. The cofactor is Mg(2+).

Its subcellular location is the endoplasmic reticulum membrane. The catalysed reaction is Exonucleolytic cleavage of poly(A) to 5'-AMP.. 3'-exoribonuclease that has a preference for poly(A) tails of mRNAs, thereby efficiently degrading poly(A) tails. Exonucleolytic degradation of the poly(A) tail is often the first step in the decay of eukaryotic mRNAs and is also used to silence certain maternal mRNAs translationally during oocyte maturation and early embryonic development. May act as a regulator of multipotency in embryonic stem cells. Is a critical factor for proper spermatogenesis, involved in pre-piRNAs processing to generate mature piRNAs. This Pongo abelii (Sumatran orangutan) protein is Poly(A)-specific ribonuclease PNLDC1.